A 200-amino-acid chain; its full sequence is Small ribosomal subunit protein uS4 (200 aa).

The tract at residues 22–43 (TGKELERRPYAPGQHGPTQRKK) is disordered. An S4 RNA-binding domain is found at 92–170 (QRLDNIVYRL…VPEYVTFDAE (79 aa)).

It belongs to the universal ribosomal protein uS4 family. In terms of assembly, part of the 30S ribosomal subunit. Contacts protein S5. The interaction surface between S4 and S5 is involved in control of translational fidelity.

One of the primary rRNA binding proteins, it binds directly to 16S rRNA where it nucleates assembly of the body of the 30S subunit. Functionally, with S5 and S12 plays an important role in translational accuracy. This Listeria monocytogenes serotype 4a (strain HCC23) protein is Small ribosomal subunit protein uS4.